The following is a 102-amino-acid chain: Protein translation factor SUI1 homolog (102 aa).

It belongs to the SUI1 family.

The chain is Protein translation factor SUI1 homolog from Methanosarcina mazei (strain ATCC BAA-159 / DSM 3647 / Goe1 / Go1 / JCM 11833 / OCM 88) (Methanosarcina frisia).